A 237-amino-acid polypeptide reads, in one-letter code: 5'-methylthioadenosine/S-adenosylhomocysteine nucleosidase (237 aa).

Glu12 functions as the Proton acceptor in the catalytic mechanism. Substrate contacts are provided by residues Ala78, Ile152, and 173 to 174 (ME). Asp197 functions as the Proton donor in the catalytic mechanism.

Belongs to the PNP/UDP phosphorylase family. MtnN subfamily. As to quaternary structure, homodimer.

The enzyme catalyses S-adenosyl-L-homocysteine + H2O = S-(5-deoxy-D-ribos-5-yl)-L-homocysteine + adenine. The catalysed reaction is S-methyl-5'-thioadenosine + H2O = 5-(methylsulfanyl)-D-ribose + adenine. It carries out the reaction 5'-deoxyadenosine + H2O = 5-deoxy-D-ribose + adenine. Its pathway is amino-acid biosynthesis; L-methionine biosynthesis via salvage pathway; S-methyl-5-thio-alpha-D-ribose 1-phosphate from S-methyl-5'-thioadenosine (hydrolase route): step 1/2. Catalyzes the irreversible cleavage of the glycosidic bond in both 5'-methylthioadenosine (MTA) and S-adenosylhomocysteine (SAH/AdoHcy) to adenine and the corresponding thioribose, 5'-methylthioribose and S-ribosylhomocysteine, respectively. Also cleaves 5'-deoxyadenosine, a toxic by-product of radical S-adenosylmethionine (SAM) enzymes, into 5-deoxyribose and adenine. Thus, is required for in vivo function of the radical SAM enzymes biotin synthase and lipoic acid synthase, that are inhibited by 5'-deoxyadenosine accumulation. The chain is 5'-methylthioadenosine/S-adenosylhomocysteine nucleosidase from Hamiltonella defensa subsp. Acyrthosiphon pisum (strain 5AT).